The following is an 871-amino-acid chain: DNA mismatch repair protein MutS (871 aa).

ATP is bound at residue 620 to 627 (GPNMGGKS). Residues 806–837 (HHGGLNEPKQATMELTPPPEAIPSHTEKRNPL) form a disordered region.

This sequence belongs to the DNA mismatch repair MutS family.

This protein is involved in the repair of mismatches in DNA. It is possible that it carries out the mismatch recognition step. This protein has a weak ATPase activity. The protein is DNA mismatch repair protein MutS of Idiomarina loihiensis (strain ATCC BAA-735 / DSM 15497 / L2-TR).